Here is a 383-residue protein sequence, read N- to C-terminus: Vesicle-associated membrane protein-associated protein scs2 (383 aa).

The MSP domain occupies 1–123 (MSVECSGELF…SIFDRKIRCV (123 aa)). Topologically, residues 1–362 (MSVECSGELF…TGASLTESPG (362 aa)) are cytoplasmic. Residues 127 to 146 (KQPPQSADKQVENTSTSNPP) are compositionally biased toward polar residues. 2 disordered regions span residues 127-160 (KQPP…SSVG) and 233-359 (ESAS…SLTE). 5 positions are modified to phosphoserine: S236, S237, S259, S261, and S268. Residues 241–263 (DVARSKVQDIIDNEIPKPSESPR) show a composition bias toward basic and acidic residues. Residues 289–300 (FDTKKNDFDSKL) show a composition bias toward basic and acidic residues. A compositionally biased stretch (polar residues) spans 347 to 359 (ADPSSSTGASLTE). A helical; Anchor for type IV membrane protein membrane pass occupies residues 363-383 (IPPNIVIILCLIFFLIGYLFF).

Belongs to the VAMP-associated protein (VAP) (TC 9.B.17) family. As to quaternary structure, interacts (via MSP domain) with duc1 (via FFAT-motif); the interaction is direct and serves to restrict the localization of duc1 to areas of cell membrane-endoplasmic reticulum contact sites, and away from the cell division site. Interacts with epr1.

The protein localises to the endoplasmic reticulum membrane. In terms of biological role, vesicle-associated membrane protein-associated protein (VAP) implicated in maintaining the cortical endoplasmic reticulum (ER)-plasma membrane (PM) attachment. ER-PM contacts function to modulate the distribution of contractile ring components to ensure robust ring assembly. ER-PM contacts function also in controlling exocytosis and maintenance of cell polarity regulating cell shape. VAPs play an important role in regulating eisosome assembly. VAPs also contribute to ER-phagy by tethering atg8 to the ER membrane, but also by maintaining the ER-plasma membrane contact. Restricts the localization of duc1 away from the site of cell division. In Schizosaccharomyces pombe (strain 972 / ATCC 24843) (Fission yeast), this protein is Vesicle-associated membrane protein-associated protein scs2 (scs2).